We begin with the raw amino-acid sequence, 125 residues long: Dirigent protein 22 (125 aa).

N-linked (GlcNAc...) asparagine glycans are attached at residues asparagine 8, asparagine 30, and asparagine 65.

The protein belongs to the plant dirigent protein family. In terms of assembly, homodimer.

It localises to the secreted. It is found in the extracellular space. Its subcellular location is the apoplast. Functionally, dirigent proteins impart stereoselectivity on the phenoxy radical-coupling reaction, yielding optically active lignans from two molecules of coniferyl alcohol in the biosynthesis of lignans, flavonolignans, and alkaloids and thus plays a central role in plant secondary metabolism. This is Dirigent protein 22 (DIR22) from Arabidopsis thaliana (Mouse-ear cress).